The following is a 443-amino-acid chain: MDRLGSFSNDPSDKPPCRGCSSYLMEPYIKCAECGPPPFFLCLQCFTRGFEYKKHQSDHTYEIMTSDFPVLDPSWTAQEEMALLEAVMDCGFGNWQDVANQMCTKTKEECEKHYMKHFINNPLFASTLLNLKQAEAAKTADTAIPFHSADDPPRPAFDSLLSRDMAGYMPARADFIEEFDNYAEWDLRDIDFVEDDSDILHALKMAVVDIYHSRLKERQRRKKIIRDHGLVNLRKFRLMERRYPKEVQDLYETMRRFARIVGPVEHDKFIESHALEFELRREIKRLQEYRTAGITNFCSARTYDHLKKTREEERLKRTMLSEVLQYIQDSSACQQWLRRQADIDSGLSPSVLMASNSGRRSAPPLNLTGLPGTEKLNEKEKELCQVVRLVPGAYLEYKSALLNECHKQGGLRLAQARALIKIDVNKTRKIYDFLIREGYITKA.

The residue at position 6 (Ser-6) is a Phosphoserine. The segment at 12–69 adopts a ZZ-type zinc-finger fold; it reads SDKPPCRGCSSYLMEPYIKCAECGPPPFFLCLQCFTRGFEYKKHQSDHTYEIMTSDFP. Zn(2+)-binding residues include Cys-17, Cys-20, Cys-31, Cys-34, Cys-42, Cys-45, His-55, and His-59. In terms of domain architecture, SANT spans 70–122; that stretch reads VLDPSWTAQEEMALLEAVMDCGFGNWQDVANQMCTKTKEECEKHYMKHFINNP. Glycyl lysine isopeptide (Lys-Gly) (interchain with G-Cter in SUMO2) cross-links involve residues Lys-132 and Lys-138. Positions 356–443 constitute an SWIRM domain; it reads NSGRRSAPPL…LIREGYITKA (88 aa). The DNA-binding element occupies 426-435; sequence KTRKIYDFLI.

As to quaternary structure, interacts with GCN5 and NR3C1. Associated with the P/CAF protein in the PCAF complex. Component of the PCAF complex, at least composed of TADA2L/ADA2, TADA3L/ADA3, TAF5L/PAF65-beta, TAF6L/PAF65-alpha, TAF10/TAFII30, TAF12/TAFII20, TAF9/TAFII31 and TRRAP. Component of the ADA2A-containing complex (ATAC), composed of KAT14, KAT2A, TADA2L, TADA3L, ZZ3, MBIP, WDR5, YEATS2, CCDC101 and DR1. Interacts with CCDC134.

It localises to the nucleus. The protein localises to the chromosome. In terms of biological role, component of the ATAC complex, a complex with histone acetyltransferase activity on histones H3 and H4. Required for the function of some acidic activation domains, which activate transcription from a distant site. Binds double-stranded DNA. Binds dinucleosomes, probably at the linker region between neighboring nucleosomes. Plays a role in chromatin remodeling. May promote TP53/p53 'Lys-321' acetylation, leading to reduced TP53 stability and transcriptional activity. May also promote XRCC6 acetylation thus facilitating cell apoptosis in response to DNA damage. The polypeptide is Transcriptional adapter 2-alpha (Tada2a) (Rattus norvegicus (Rat)).